We begin with the raw amino-acid sequence, 263 residues long: Serine protease ami (263 aa).

Positions 1–21 are cleaved as a signal peptide; that stretch reads MNISRVLFAVVLVLTVSTYEC. A glycan (N-linked (GlcNAc...) asparagine) is linked at Asn2. The propeptide at 22-26 is activation peptide; the sequence is RPRGR. The region spanning 27–254 is the Peptidase S1 domain; it reads ILGGQDSKEK…YKSWIMETMY (228 aa). An intrachain disulfide couples Cys52 to Cys68. His67 (charge relay system) is an active-site residue. Asn73, Asn74, and Asn108 each carry an N-linked (GlcNAc...) asparagine glycan. The Charge relay system role is filled by Asp115. 3 disulfide bridges follow: Cys149–Cys215, Cys180–Cys196, and Cys205–Cys230. The active-site Charge relay system is the Ser209. N-linked (GlcNAc...) asparagine glycosylation occurs at Asn255.

This sequence belongs to the peptidase S1 family. In terms of tissue distribution, in the embryo, localizes to paraxial regions at the neurula stage and anterior ventral regions at the tailbud stage. From the late tailbud to tadpole stage, expressed along the forming blood vessels including the anterior cardinal veins, posterior cardinal veins, intersomitic veins, dorsal longitudinal anastomosing vessel, dorsal aorta, pronephric sinus and most prominently around the vascular vitelline network, where expression shows left-right asymmetry in the stage 42 embryo. Localizes to endothelial cells. In adults, shows highest expression in liver with moderate levels of expression in the fat body, lung, gut and vessels. Weakly expressed in adult heart, muscle, testis and ovary.

The protein localises to the secreted. Probable serine protease. This Xenopus laevis (African clawed frog) protein is Serine protease ami.